Consider the following 365-residue polypeptide: 2'-hydroxybiphenyl-2-sulfinate desulfinase (365 aa).

Cys-27 is a catalytic residue. Residues Cys-27, His-60, and Arg-70 each contribute to the 2'-hydroxybiphenyl-2-sulfinate site. The active site involves Arg-70.

This sequence belongs to the DszB desulfinase family. In terms of assembly, monomer.

Its subcellular location is the cytoplasm. The catalysed reaction is 2'-hydroxybiphenyl-2-sulfinate + H2O = biphenyl-2-ol + sulfite + H(+). The protein operates within sulfur metabolism; dibenzothiophene degradation. Catalyzes the third and final step of the '4S' desulfurization pathway that removes covalently bound sulfur from dibenzothiophene (DBT) without breaking carbon-carbon bonds. Oxidizes 2-(2'-hydroxyphenyl)benzene sulphinate (HBPS) to 2-hydroxybiphenyl (HBP) plus sulfite. The rate-limiting step of the '4S' desulfurization pathway. In Rhodococcus erythropolis (Arthrobacter picolinophilus), this protein is 2'-hydroxybiphenyl-2-sulfinate desulfinase.